Consider the following 266-residue polypeptide: Ras-like protein family member 12 (266 aa).

GTP is bound by residues 27 to 34 (GRRGAGKS), 74 to 78 (DTADL), and 134 to 137 (NKLD).

This sequence belongs to the small GTPase superfamily. Ras family.

It carries out the reaction GTP + H2O = GDP + phosphate + H(+). The chain is Ras-like protein family member 12 (Rasl12) from Mus musculus (Mouse).